Here is a 141-residue protein sequence, read N- to C-terminus: ATP synthase epsilon chain (141 aa).

Belongs to the ATPase epsilon chain family. In terms of assembly, F-type ATPases have 2 components, CF(1) - the catalytic core - and CF(0) - the membrane proton channel. CF(1) has five subunits: alpha(3), beta(3), gamma(1), delta(1), epsilon(1). CF(0) has three main subunits: a, b and c.

Its subcellular location is the cell inner membrane. In terms of biological role, produces ATP from ADP in the presence of a proton gradient across the membrane. In Acidithiobacillus ferridurans, this protein is ATP synthase epsilon chain (atpC).